The following is a 305-amino-acid chain: MIGGDFAVVKAKKSLERRGFGVKRGDKIYLHPLEVVYLQIKGIESFGELEDVLSWAESRMEDFSTYYFVYEDLRDRGNKVKIQGEFLLTKKPYLPISERKTIRMEEIAEKARNFDELRLAVVDEESEITYFRVYEPDMMGEQKEELPEIAGILSDEYVITKQTEIFSRYFYGSEKGDLVTLSLIESLYLLDLGKLNLLNADREELVKRAREVERNFDRRYEVYRNLKERGFVVKTGFKFGSEFRVYRKVESVDDLPHSEYLVDIADSREIRLIDLARAVRLAQNVRKRMVFAYGKNYLCFERVKV.

Residues tyrosine 246, histidine 257, and lysine 287 contribute to the active site.

The protein belongs to the tRNA-intron endonuclease family. Archaeal long subfamily. Homodimer.

It carries out the reaction pretRNA = a 3'-half-tRNA molecule with a 5'-OH end + a 5'-half-tRNA molecule with a 2',3'-cyclic phosphate end + an intron with a 2',3'-cyclic phosphate and a 5'-hydroxyl terminus.. Endonuclease that removes tRNA introns. Cleaves pre-tRNA at the 5'- and 3'-splice sites to release the intron. The products are an intron and two tRNA half-molecules bearing 2',3' cyclic phosphate and 5'-OH termini. Recognizes a pseudosymmetric substrate in which 2 bulged loops of 3 bases are separated by a stem of 4 bp. The chain is tRNA-splicing endonuclease from Archaeoglobus fulgidus (strain ATCC 49558 / DSM 4304 / JCM 9628 / NBRC 100126 / VC-16).